The chain runs to 267 residues: Glutamate racemase (267 aa).

Residues 10–11 (DS) and 42–43 (YG) each bind substrate. The active-site Proton donor/acceptor is Cys-73. 74-75 (NT) is a substrate binding site. Catalysis depends on Cys-183, which acts as the Proton donor/acceptor. Position 184 to 185 (184 to 185 (TH)) interacts with substrate.

The protein belongs to the aspartate/glutamate racemases family.

The enzyme catalyses L-glutamate = D-glutamate. Its pathway is cell wall biogenesis; peptidoglycan biosynthesis. In terms of biological role, provides the (R)-glutamate required for cell wall biosynthesis. The sequence is that of Glutamate racemase from Limosilactobacillus reuteri (strain DSM 20016) (Lactobacillus reuteri).